Here is an 89-residue protein sequence, read N- to C-terminus: Small ribosomal subunit protein uS15 (89 aa).

The protein belongs to the universal ribosomal protein uS15 family. In terms of assembly, part of the 30S ribosomal subunit. Forms a bridge to the 50S subunit in the 70S ribosome, contacting the 23S rRNA.

In terms of biological role, one of the primary rRNA binding proteins, it binds directly to 16S rRNA where it helps nucleate assembly of the platform of the 30S subunit by binding and bridging several RNA helices of the 16S rRNA. Functionally, forms an intersubunit bridge (bridge B4) with the 23S rRNA of the 50S subunit in the ribosome. This is Small ribosomal subunit protein uS15 from Pseudomonas savastanoi pv. phaseolicola (strain 1448A / Race 6) (Pseudomonas syringae pv. phaseolicola (strain 1448A / Race 6)).